Reading from the N-terminus, the 475-residue chain is Aspartyl/glutamyl-tRNA(Asn/Gln) amidotransferase subunit B (475 aa).

This sequence belongs to the GatB/GatE family. GatB subfamily. As to quaternary structure, heterotrimer of A, B and C subunits.

It catalyses the reaction L-glutamyl-tRNA(Gln) + L-glutamine + ATP + H2O = L-glutaminyl-tRNA(Gln) + L-glutamate + ADP + phosphate + H(+). The enzyme catalyses L-aspartyl-tRNA(Asn) + L-glutamine + ATP + H2O = L-asparaginyl-tRNA(Asn) + L-glutamate + ADP + phosphate + 2 H(+). In terms of biological role, allows the formation of correctly charged Asn-tRNA(Asn) or Gln-tRNA(Gln) through the transamidation of misacylated Asp-tRNA(Asn) or Glu-tRNA(Gln) in organisms which lack either or both of asparaginyl-tRNA or glutaminyl-tRNA synthetases. The reaction takes place in the presence of glutamine and ATP through an activated phospho-Asp-tRNA(Asn) or phospho-Glu-tRNA(Gln). The chain is Aspartyl/glutamyl-tRNA(Asn/Gln) amidotransferase subunit B from Chlorobium chlorochromatii (strain CaD3).